Consider the following 290-residue polypeptide: NH(3)-dependent NAD(+) synthetase (290 aa).

Position 33-40 (33-40 (GVSGGVDS)) interacts with ATP. Residue D39 participates in Mg(2+) binding. R154 serves as a coordination point for deamido-NAD(+). Residue T174 participates in ATP binding. Mg(2+) is bound at residue E179. 2 residues coordinate deamido-NAD(+): K187 and D194. ATP contacts are provided by K203 and S225.

It belongs to the NAD synthetase family. Homodimer.

It carries out the reaction deamido-NAD(+) + NH4(+) + ATP = AMP + diphosphate + NAD(+) + H(+). It functions in the pathway cofactor biosynthesis; NAD(+) biosynthesis; NAD(+) from deamido-NAD(+) (ammonia route): step 1/1. In terms of biological role, catalyzes the ATP-dependent amidation of deamido-NAD to form NAD. Uses ammonia as a nitrogen source. This Thermotoga neapolitana (strain ATCC 49049 / DSM 4359 / NBRC 107923 / NS-E) protein is NH(3)-dependent NAD(+) synthetase.